Here is a 610-residue protein sequence, read N- to C-terminus: UvrABC system protein C (610 aa).

The region spanning 16 to 94 is the GIY-YIG domain; sequence SQPGVYRMYD…IKLYQPRYNV (79 aa). The UVR domain occupies 204-239; the sequence is DQVLTQLIARMEKASQDLAFEEAARIRDQIQAVRRV.

Belongs to the UvrC family. As to quaternary structure, interacts with UvrB in an incision complex.

It localises to the cytoplasm. The UvrABC repair system catalyzes the recognition and processing of DNA lesions. UvrC both incises the 5' and 3' sides of the lesion. The N-terminal half is responsible for the 3' incision and the C-terminal half is responsible for the 5' incision. This Salmonella dublin (strain CT_02021853) protein is UvrABC system protein C.